The following is a 353-amino-acid chain: 3'-5' exonuclease (353 aa).

The disordered stretch occupies residues 1-119; it reads MEKYLTKMPI…PSPEKEKPEK (119 aa). 2 stretches are compositionally biased toward basic and acidic residues: residues 13–30 and 37–50; these read KANE…ETPK and KKDT…KENA. Residues 59 to 70 are compositionally biased toward basic residues; the sequence is TKGRPGRPAAKR. Positions 71-90 are enriched in basic and acidic residues; it reads KNLDTPDVTEKLAMEEENPP. Ser-103, Ser-109, and Ser-111 each carry phosphoserine. Residues 145 to 313 enclose the 3'-5' exonuclease domain; sequence VLQWVEKQKD…GQVIYRELER (169 aa). Mg(2+) is bound by residues Asp-162, Glu-164, and Asp-300.

It belongs to the WRNexo family.

The protein resides in the nucleus. In terms of biological role, has exonuclease activity on both single-stranded and duplex templates bearing overhangs, but not blunt ended duplex DNA, and cleaves in a 3'-5' direction. Essential for the formation of DNA replication focal centers. Has an important role in maintaining genome stability. This Drosophila melanogaster (Fruit fly) protein is 3'-5' exonuclease.